The following is a 261-amino-acid chain: MDMALPEFSMRQLLEAGVHYGHQTQRWNPRMAEFIYGERNGIHIVDLTQTVPMLDAALQVVRDTVAKGGRVLFVGTKRQAQKAVADAAERSAQFYMNHRWLGGTLTNWKTVSQSIQRLKALDETLGSGAEGLTKKERLQMEREQAKLQASLGGIREMGGLPDLLFVIDVNKEDLAIAEAKKLGIPVVAVVDTNCSPKGVDYVIPGNDDAARAIALYCDLVSRAALDGMTAQMGAAGVDLGALEASVEEELTGETAEEAAEA.

This sequence belongs to the universal ribosomal protein uS2 family.

In Paracoccus denitrificans (strain Pd 1222), this protein is Small ribosomal subunit protein uS2.